Consider the following 162-residue polypeptide: Protein NrdI (162 aa).

The protein belongs to the NrdI family.

In terms of biological role, probably involved in ribonucleotide reductase function. The chain is Protein NrdI from Streptococcus pyogenes serotype M2 (strain MGAS10270).